We begin with the raw amino-acid sequence, 281 residues long: Pantothenate synthetase (281 aa).

26-33 provides a ligand contact to ATP; it reads MGYLHQGH. Catalysis depends on H33, which acts as the Proton donor. Q57 is a (R)-pantoate binding site. Residue Q57 participates in beta-alanine binding. 143 to 146 provides a ligand contact to ATP; it reads GQKD. Q149 provides a ligand contact to (R)-pantoate. ATP-binding positions include V172 and 180–183; that span reads LSSR.

The protein belongs to the pantothenate synthetase family. Homodimer.

It is found in the cytoplasm. The enzyme catalyses (R)-pantoate + beta-alanine + ATP = (R)-pantothenate + AMP + diphosphate + H(+). Its pathway is cofactor biosynthesis; (R)-pantothenate biosynthesis; (R)-pantothenate from (R)-pantoate and beta-alanine: step 1/1. Catalyzes the condensation of pantoate with beta-alanine in an ATP-dependent reaction via a pantoyl-adenylate intermediate. This is Pantothenate synthetase from Chloroflexus aurantiacus (strain ATCC 29366 / DSM 635 / J-10-fl).